The sequence spans 509 residues: DNA nucleotidylexotransferase (509 aa).

The tract at residues 1–24 (MDPPRASHLSPRKKRPRQTGALMA) is disordered. The Nuclear localization signal signature appears at 11 to 17 (PRKKRPR). One can recognise a BRCT domain in the interval 27–124 (PQDIKFQDLV…KPVEMTGKHQ (98 aa)). Ser134 carries the phosphoserine modification. Positions 151–509 (SQYACQRRTT…DYIEPWERNA (359 aa)) are mediates interaction with DNTTIP2. The tract at residues 258-262 (VGLKT) is involved in DNA binding. A 2'-deoxyribonucleoside 5'-triphosphate is bound by residues 333–338 (GFRRGK) and 342–345 (HDVD). 3 residues coordinate Mg(2+): Asp343, Asp345, and Asp433. 448-449 (GW) serves as a coordination point for a 2'-deoxyribonucleoside 5'-triphosphate.

This sequence belongs to the DNA polymerase type-X family. Interacts with PRP19 and DNTTIP1. Forms a ternary complex with DNTTIP2 and core histone. Released from this complex by PCNA. Interacts with TRERF1. Mg(2+) is required as a cofactor.

The protein resides in the nucleus. It catalyses the reaction DNA(n) + a 2'-deoxyribonucleoside 5'-triphosphate = DNA(n+1) + diphosphate. Its function is as follows. Template-independent DNA polymerase which catalyzes the random addition of deoxynucleoside 5'-triphosphate to the 3'-end of a DNA initiator. One of the in vivo functions of this enzyme is the addition of nucleotides at the junction (N region) of rearranged Ig heavy chain and T-cell receptor gene segments during the maturation of B- and T-cells. This Homo sapiens (Human) protein is DNA nucleotidylexotransferase (DNTT).